Consider the following 222-residue polypeptide: Probable nicotinate-nucleotide adenylyltransferase (222 aa).

The protein belongs to the NadD family.

It catalyses the reaction nicotinate beta-D-ribonucleotide + ATP + H(+) = deamido-NAD(+) + diphosphate. It participates in cofactor biosynthesis; NAD(+) biosynthesis; deamido-NAD(+) from nicotinate D-ribonucleotide: step 1/1. Functionally, catalyzes the reversible adenylation of nicotinate mononucleotide (NaMN) to nicotinic acid adenine dinucleotide (NaAD). The chain is Probable nicotinate-nucleotide adenylyltransferase from Xylella fastidiosa (strain M12).